A 440-amino-acid polypeptide reads, in one-letter code: Long-chain alkane monooxygenase (440 aa).

Residues Asp-58, 137–138, Tyr-158, and 227–230 contribute to the FMN site; these read SH and AGMS.

Belongs to the NtaA/SnaA/DszA monooxygenase family. Homodimer.

It is found in the secreted. The enzyme catalyses a long-chain alkane + FMNH2 + O2 = a long chain fatty alcohol + FMN + H2O + H(+). In terms of biological role, involved in the degradation of long-chain alkanes. Converts alkanes ranging from C(15) to C(36) into their corresponding primary alcohols. This chain is Long-chain alkane monooxygenase, found in Geobacillus thermodenitrificans (strain NG80-2).